A 948-amino-acid polypeptide reads, in one-letter code: Putative JmjC domain-containing histone demethylation protein 1 (948 aa).

One can recognise a JmjC domain in the interval 243-402; it reads VSTTKLAYYV…PQLSIYNLEL (160 aa). A substrate-binding site is contributed by Thr294. His297 and Glu299 together coordinate Fe cation. Position 314 (Lys314) interacts with substrate.

This sequence belongs to the JHDM1 histone demethylase family. The cofactor is Fe(2+).

Its subcellular location is the nucleus. The catalysed reaction is N(6),N(6)-dimethyl-L-lysyl(36)-[histone H3] + 2 2-oxoglutarate + 2 O2 = L-lysyl(36)-[histone H3] + 2 formaldehyde + 2 succinate + 2 CO2. Functionally, may be a histone demethylase that specifically demethylates 'Lys-36' of histone H3, thereby playing a central role in histone code. Represses transcriptional silencing by negatively affecting heterochromatin stability. This Schizosaccharomyces pombe (strain 972 / ATCC 24843) (Fission yeast) protein is Putative JmjC domain-containing histone demethylation protein 1 (jhd1).